We begin with the raw amino-acid sequence, 864 residues long: Translation initiation factor IF-2 (864 aa).

Residues 1–252 (MEDKNKTIKE…KTSSDKRDFS (252 aa)) are disordered. Basic and acidic residues predominate over residues 78 to 90 (KEVKYEESSRKQD). The segment covering 106 to 120 (VRPSGDSSYPVSRSP) has biased composition (polar residues). The segment covering 150-212 (RGPGQGGGYQ…PGNRSGGPGG (63 aa)) has biased composition (gly residues). Residues 239 to 252 (HDKEKTSSDKRDFS) show a composition bias toward basic and acidic residues. The tr-type G domain occupies 359-528 (NRPPVVTIMG…LLQAEVMDLK (170 aa)). The tract at residues 368–375 (GHVDHGKT) is G1. 368–375 (GHVDHGKT) serves as a coordination point for GTP. Positions 393–397 (GITQH) are G2. The interval 414-417 (DTPG) is G3. Residues 414–418 (DTPGH) and 468–471 (NKID) each bind GTP. Residues 468–471 (NKID) are G4. Positions 504 to 506 (SAR) are G5.

It belongs to the TRAFAC class translation factor GTPase superfamily. Classic translation factor GTPase family. IF-2 subfamily.

It localises to the cytoplasm. In terms of biological role, one of the essential components for the initiation of protein synthesis. Protects formylmethionyl-tRNA from spontaneous hydrolysis and promotes its binding to the 30S ribosomal subunits. Also involved in the hydrolysis of GTP during the formation of the 70S ribosomal complex. In Leptospira borgpetersenii serovar Hardjo-bovis (strain L550), this protein is Translation initiation factor IF-2.